A 261-amino-acid chain; its full sequence is Taurine import ATP-binding protein TauB (261 aa).

The ABC transporter domain occupies 4–233; the sequence is LQLERIGAQY…RYAAGESARA (230 aa). Residue 38–45 coordinates ATP; it reads GPSGSGKT.

This sequence belongs to the ABC transporter superfamily. Taurine importer (TC 3.A.1.17.1) family. The complex is composed of two ATP-binding proteins (TauB), two transmembrane proteins (TauC) and a solute-binding protein (TauA).

The protein resides in the cell inner membrane. It catalyses the reaction taurine(out) + ATP + H2O = taurine(in) + ADP + phosphate + H(+). Functionally, part of the ABC transporter complex TauABC involved in taurine import. Responsible for energy coupling to the transport system. The sequence is that of Taurine import ATP-binding protein TauB from Pseudomonas savastanoi pv. phaseolicola (strain 1448A / Race 6) (Pseudomonas syringae pv. phaseolicola (strain 1448A / Race 6)).